Consider the following 139-residue polypeptide: Ribonuclease P protein component (139 aa).

The interval 120–139 is disordered; it reads KATTGGECTPKSEKCVTAPR.

The protein belongs to the RnpA family. Consists of a catalytic RNA component (M1 or rnpB) and a protein subunit.

It carries out the reaction Endonucleolytic cleavage of RNA, removing 5'-extranucleotides from tRNA precursor.. Its function is as follows. RNaseP catalyzes the removal of the 5'-leader sequence from pre-tRNA to produce the mature 5'-terminus. It can also cleave other RNA substrates such as 4.5S RNA. The protein component plays an auxiliary but essential role in vivo by binding to the 5'-leader sequence and broadening the substrate specificity of the ribozyme. The polypeptide is Ribonuclease P protein component (Chlamydia pneumoniae (Chlamydophila pneumoniae)).